The primary structure comprises 268 residues: Tryptophan synthase alpha chain (268 aa).

Residues Glu-49 and Asp-60 each act as proton acceptor in the active site.

The protein belongs to the TrpA family. In terms of assembly, tetramer of two alpha and two beta chains.

The enzyme catalyses (1S,2R)-1-C-(indol-3-yl)glycerol 3-phosphate + L-serine = D-glyceraldehyde 3-phosphate + L-tryptophan + H2O. It functions in the pathway amino-acid biosynthesis; L-tryptophan biosynthesis; L-tryptophan from chorismate: step 5/5. The alpha subunit is responsible for the aldol cleavage of indoleglycerol phosphate to indole and glyceraldehyde 3-phosphate. The polypeptide is Tryptophan synthase alpha chain (Yersinia pestis bv. Antiqua (strain Antiqua)).